Consider the following 267-residue polypeptide: MKSSEPASVSAAERRAETFQHKLEQFNPGIVWLDQHGRVTAFNDVALQILGPAGEQSLGVAQDSLFGIDVVQLHPEKSRDKLRFLLQSKDVGGCPVKSPPPVAMMINIPDRILMIKVSSMIAAGGACGTCMIFYDVTDLTTEPSGLPAGGSAPSPRRLFKIPVYRKNRVILLDLKDIVRFQGDGHYTTIVTRDDRYLSNLSLADLELRLDSSIYLRVHRSHIVSLQYAVELVKLDESVNLVMDDAEQTQVPVSRSRTAQLKELLGVV.

The 72-residue stretch at Arg-15–Leu-86 folds into the PAS domain. The heme site is built by His-74 and Met-104. Positions Ile-161–Val-266 constitute an HTH LytTR-type domain.

It depends on heme as a cofactor.

The protein localises to the cytoplasm. Functionally, one-component, b-type heme-containing aerobic sensor and transcriptional regulator that responds to CO by activating the expression of the oxidation operon cox. This is Heme-containing CO-sensing transcriptional regulator RcoM 1 (rcoM1) from Paraburkholderia xenovorans (strain LB400).